The primary structure comprises 150 residues: 3-hydroxyacyl-[acyl-carrier-protein] dehydratase FabZ (150 aa).

The active site involves His52.

Belongs to the thioester dehydratase family. FabZ subfamily.

It localises to the cytoplasm. The catalysed reaction is a (3R)-hydroxyacyl-[ACP] = a (2E)-enoyl-[ACP] + H2O. Functionally, involved in unsaturated fatty acids biosynthesis. Catalyzes the dehydration of short chain beta-hydroxyacyl-ACPs and long chain saturated and unsaturated beta-hydroxyacyl-ACPs. This Variovorax paradoxus (strain S110) protein is 3-hydroxyacyl-[acyl-carrier-protein] dehydratase FabZ.